The primary structure comprises 269 residues: Undecaprenyl-diphosphatase (269 aa).

A run of 8 helical transmembrane segments spans residues 1 to 21 (MSIFQAIILGAVQGLAEFLPI), 39 to 59 (LPILFDILLHVATLAAVCTVF), 86 to 106 (LMMIAAIIVATAVTGVIGLLL), 112 to 132 (TIDIRLIPIFFIITGLLLIAS), 144 to 164 (VTLLTAAITGLAQGIGVIPGI), 184 to 204 (AGEFSFLLSIPAILAAFILEI), 210 to 230 (LLAGVSPISLISGMISAFVVG), and 249 to 269 (FAFYLIPLGLGLSIYFWGFAG).

It belongs to the UppP family.

The protein resides in the cell inner membrane. The enzyme catalyses di-trans,octa-cis-undecaprenyl diphosphate + H2O = di-trans,octa-cis-undecaprenyl phosphate + phosphate + H(+). In terms of biological role, catalyzes the dephosphorylation of undecaprenyl diphosphate (UPP). Confers resistance to bacitracin. This is Undecaprenyl-diphosphatase from Treponema denticola (strain ATCC 35405 / DSM 14222 / CIP 103919 / JCM 8153 / KCTC 15104).